The primary structure comprises 236 residues: Phosphoribosylaminoimidazole-succinocarboxamide synthase (236 aa).

This sequence belongs to the SAICAR synthetase family.

The enzyme catalyses 5-amino-1-(5-phospho-D-ribosyl)imidazole-4-carboxylate + L-aspartate + ATP = (2S)-2-[5-amino-1-(5-phospho-beta-D-ribosyl)imidazole-4-carboxamido]succinate + ADP + phosphate + 2 H(+). It functions in the pathway purine metabolism; IMP biosynthesis via de novo pathway; 5-amino-1-(5-phospho-D-ribosyl)imidazole-4-carboxamide from 5-amino-1-(5-phospho-D-ribosyl)imidazole-4-carboxylate: step 1/2. This chain is Phosphoribosylaminoimidazole-succinocarboxamide synthase (purC), found in Lactococcus lactis subsp. lactis (strain IL1403) (Streptococcus lactis).